A 706-amino-acid polypeptide reads, in one-letter code: Elongation factor G (706 aa).

The tr-type G domain occupies 15 to 291; sequence LKTRNIGISA…GVLDYLASPV (277 aa). GTP-binding positions include 24 to 31, 91 to 95, and 145 to 148; these read AHIDSGKT, DTPGH, and NKLD.

Belongs to the TRAFAC class translation factor GTPase superfamily. Classic translation factor GTPase family. EF-G/EF-2 subfamily.

The protein localises to the cytoplasm. In terms of biological role, catalyzes the GTP-dependent ribosomal translocation step during translation elongation. During this step, the ribosome changes from the pre-translocational (PRE) to the post-translocational (POST) state as the newly formed A-site-bound peptidyl-tRNA and P-site-bound deacylated tRNA move to the P and E sites, respectively. Catalyzes the coordinated movement of the two tRNA molecules, the mRNA and conformational changes in the ribosome. This chain is Elongation factor G, found in Leptospira borgpetersenii serovar Hardjo-bovis (strain L550).